We begin with the raw amino-acid sequence, 441 residues long: Ribulose bisphosphate carboxylase large chain (441 aa).

Residue lysine 5 is modified to N6,N6,N6-trimethyllysine. Asparagine 114 and threonine 164 together coordinate substrate. The Proton acceptor role is filled by lysine 166. A substrate-binding site is contributed by lysine 168. Mg(2+) contacts are provided by lysine 192, aspartate 194, and glutamate 195. N6-carboxylysine is present on lysine 192. The active-site Proton acceptor is the histidine 285. Residues arginine 286, histidine 318, and serine 370 each contribute to the substrate site.

It belongs to the RuBisCO large chain family. Type I subfamily. As to quaternary structure, heterohexadecamer of 8 large chains and 8 small chains; disulfide-linked. The disulfide link is formed within the large subunit homodimers. Requires Mg(2+) as cofactor. The disulfide bond which can form in the large chain dimeric partners within the hexadecamer appears to be associated with oxidative stress and protein turnover.

Its subcellular location is the plastid. It is found in the chloroplast. It catalyses the reaction 2 (2R)-3-phosphoglycerate + 2 H(+) = D-ribulose 1,5-bisphosphate + CO2 + H2O. It carries out the reaction D-ribulose 1,5-bisphosphate + O2 = 2-phosphoglycolate + (2R)-3-phosphoglycerate + 2 H(+). In terms of biological role, ruBisCO catalyzes two reactions: the carboxylation of D-ribulose 1,5-bisphosphate, the primary event in carbon dioxide fixation, as well as the oxidative fragmentation of the pentose substrate in the photorespiration process. Both reactions occur simultaneously and in competition at the same active site. The protein is Ribulose bisphosphate carboxylase large chain of Pellaea rotundifolia (Button fern).